The chain runs to 1776 residues: TOG array regulator of axonemal microtubules protein 1 (1776 aa).

TOG stretches follow at residues Glu94 to Glu311 and Pro351 to Ser595. HEAT repeat units lie at residues Ala175–Gly212, Val214–Leu246, Leu250–Gln288, Asn344–Pro383, Ala389–Glu426, Gln430–Val465, Gly466–Glu503, and Phe505–Ser542. Disordered regions lie at residues Lys655–Ser676, Ile817–Asn921, His970–Asp1000, and Thr1062–Arg1084. Composition is skewed to polar residues over residues Pro826–Leu836, Asp845–Pro855, and Leu871–Gln892. The segment covering Ser988 to Asp1000 has biased composition (low complexity). Residues Asp1259 to Arg1481 are TOG 3. 2 HEAT repeats span residues Thr1297–Lys1334 and Gln1338–Pro1375. Residues Ala1493–Ala1536 form a disordered region. Low complexity predominate over residues Arg1509–Ser1520. Over residues Ser1521 to Arg1533 the composition is skewed to basic and acidic residues. The TOG 4 stretch occupies residues Ser1540–Leu1776. HEAT repeat units follow at residues Leu1541–Glu1578, Gly1582–Asp1619, and Pro1623–Asn1661.

This sequence belongs to the Crescerin family. In terms of assembly, interacts with ARMC9. Interacts with CCDC66, CEP104 and CSPP1.

Its subcellular location is the cell projection. It is found in the cilium. The protein localises to the cytoplasm. It localises to the cytoskeleton. The protein resides in the cilium axoneme. Its function is as follows. Involved in ciliogenesis. It is required for appropriate acetylation and polyglutamylation of ciliary microtubules, and regulation of cilium length. Interacts with microtubules and promotes microtubule polymerization via its HEAT repeat domains, especially those in TOG region 2 and 4. The chain is TOG array regulator of axonemal microtubules protein 1 (Togaram1) from Mus musculus (Mouse).